Reading from the N-terminus, the 455-residue chain is Acid sphingomyelinase-like phosphodiesterase 3b (455 aa).

Residues 1-18 form the signal peptide; that stretch reads MRLLAWLIFLANWGGARA. Positions 28 and 30 each coordinate Zn(2+). A disulfide bond links cysteine 45 and cysteine 64. A glycan (N-linked (GlcNAc...) asparagine) is linked at asparagine 72. The Zn(2+) site is built by aspartate 93 and asparagine 134. An N-linked (GlcNAc...) asparagine glycan is attached at asparagine 164. Zn(2+)-binding residues include histidine 236, histidine 277, and histidine 279. The N-linked (GlcNAc...) asparagine glycan is linked to asparagine 343. 2 disulfide bridges follow: cysteine 405-cysteine 409 and cysteine 415-cysteine 428.

Belongs to the acid sphingomyelinase family. Interacts with TLR4, TLR7, TLR8 and TLR9. It depends on Zn(2+) as a cofactor. N-glycosylated.

The protein resides in the secreted. It is found in the cell membrane. In terms of biological role, lipid-modulating phosphodiesterase. Active on the surface of macrophages and dendritic cells and strongly influences macrophage lipid composition and membrane fluidity. Acts as a negative regulator of Toll-like receptor signaling. Has in vitro phosphodiesterase activity, but the physiological substrate is unknown. Lacks activity with phosphocholine-containing lipids, but can cleave CDP-choline, and can release phosphate from ATP and ADP (in vitro). The sequence is that of Acid sphingomyelinase-like phosphodiesterase 3b (SMPDL3B) from Homo sapiens (Human).